The following is a 545-amino-acid chain: Light-independent protochlorophyllide reductase subunit N (545 aa).

3 residues coordinate [4Fe-4S] cluster: C102, C127, and C187.

It belongs to the BchN/ChlN family. In terms of assembly, protochlorophyllide reductase is composed of three subunits; ChlL, ChlN and ChlB. Forms a heterotetramer of two ChlB and two ChlN subunits. [4Fe-4S] cluster is required as a cofactor.

Its subcellular location is the plastid. It localises to the chloroplast. The catalysed reaction is chlorophyllide a + oxidized 2[4Fe-4S]-[ferredoxin] + 2 ADP + 2 phosphate = protochlorophyllide a + reduced 2[4Fe-4S]-[ferredoxin] + 2 ATP + 2 H2O. Its pathway is porphyrin-containing compound metabolism; chlorophyll biosynthesis (light-independent). In terms of biological role, component of the dark-operative protochlorophyllide reductase (DPOR) that uses Mg-ATP and reduced ferredoxin to reduce ring D of protochlorophyllide (Pchlide) to form chlorophyllide a (Chlide). This reaction is light-independent. The NB-protein (ChlN-ChlB) is the catalytic component of the complex. In Chlamydomonas reinhardtii (Chlamydomonas smithii), this protein is Light-independent protochlorophyllide reductase subunit N.